The following is a 250-amino-acid chain: tRNA (guanine-N(1)-)-methyltransferase (250 aa).

Residues glycine 115 and 135-140 contribute to the S-adenosyl-L-methionine site; that span reads LGDFVL.

The protein belongs to the RNA methyltransferase TrmD family. In terms of assembly, homodimer.

It is found in the cytoplasm. The enzyme catalyses guanosine(37) in tRNA + S-adenosyl-L-methionine = N(1)-methylguanosine(37) in tRNA + S-adenosyl-L-homocysteine + H(+). Functionally, specifically methylates guanosine-37 in various tRNAs. This is tRNA (guanine-N(1)-)-methyltransferase from Legionella pneumophila (strain Lens).